The chain runs to 533 residues: Apolipoprotein N-acyltransferase (533 aa).

Helical transmembrane passes span 17–37 (ALLA…FGFF), 74–94 (WLFG…ALLI), 105–125 (LAIL…AVLA), 127–147 (LLWS…GLLE), 178–198 (VIGV…PALL), and 205–225 (VPGI…GYYA). One can recognise a CN hydrolase domain in the interval 245-495 (VQPAIDQEAK…QGFVDSTLSG (251 aa)). The active-site Proton acceptor is the Glu-290. Lys-354 is an active-site residue. Cys-407 (nucleophile) is an active-site residue. The chain crosses the membrane as a helical span at residues 509 to 529 (YFWLIIGIVGMIAVISRMGFI).

The protein belongs to the CN hydrolase family. Apolipoprotein N-acyltransferase subfamily.

The protein localises to the cell inner membrane. The enzyme catalyses N-terminal S-1,2-diacyl-sn-glyceryl-L-cysteinyl-[lipoprotein] + a glycerophospholipid = N-acyl-S-1,2-diacyl-sn-glyceryl-L-cysteinyl-[lipoprotein] + a 2-acyl-sn-glycero-3-phospholipid + H(+). It functions in the pathway protein modification; lipoprotein biosynthesis (N-acyl transfer). Catalyzes the phospholipid dependent N-acylation of the N-terminal cysteine of apolipoprotein, the last step in lipoprotein maturation. In Rhizobium rhizogenes (strain K84 / ATCC BAA-868) (Agrobacterium radiobacter), this protein is Apolipoprotein N-acyltransferase.